The sequence spans 608 residues: 1-deoxy-D-xylulose-5-phosphate synthase (608 aa).

Residues H80 and G121–S123 each bind thiamine diphosphate. Position 152 (D152) interacts with Mg(2+). Thiamine diphosphate-binding positions include G153–A154, N181, Y282, and E357. N181 is a binding site for Mg(2+).

Belongs to the transketolase family. DXPS subfamily. In terms of assembly, homodimer. Mg(2+) serves as cofactor. It depends on thiamine diphosphate as a cofactor.

The catalysed reaction is D-glyceraldehyde 3-phosphate + pyruvate + H(+) = 1-deoxy-D-xylulose 5-phosphate + CO2. It functions in the pathway metabolic intermediate biosynthesis; 1-deoxy-D-xylulose 5-phosphate biosynthesis; 1-deoxy-D-xylulose 5-phosphate from D-glyceraldehyde 3-phosphate and pyruvate: step 1/1. In terms of biological role, catalyzes the acyloin condensation reaction between C atoms 2 and 3 of pyruvate and glyceraldehyde 3-phosphate to yield 1-deoxy-D-xylulose-5-phosphate (DXP). This Buchnera aphidicola subsp. Acyrthosiphon pisum (strain 5A) protein is 1-deoxy-D-xylulose-5-phosphate synthase.